The following is a 399-amino-acid chain: Sphingosine-1-phosphate phosphatase 2 (399 aa).

4 helical membrane-spanning segments follow: residues 88–108, 121–141, 160–180, and 185–205; these read YLFQ…FLPF, LIII…VLKW, YGMP…LLIS, and YQYP…LVCL. The phosphatase sequence motif I stretch occupies residues 136–144; sequence KDVLKWPRP. Positions 163 to 166 are phosphatase sequence motif II; sequence PSTH. Histidine 166 serves as the catalytic Proton donor. Positions 206–217 are phosphatase sequence motif III; it reads SRLYTGMHTVLD. Histidine 213 serves as the catalytic Nucleophile. 5 helical membrane-spanning segments follow: residues 219-239, 247-267, 280-300, 318-338, and 371-391; these read LGGV…WTFI, PLFP…YPVS, ILAA…FQLV, TYML…ILLV, and VPYK…FVPM.

Belongs to the type 2 lipid phosphate phosphatase family. In terms of tissue distribution, expressed strongly in kidney and heart, followed by brain, colon, small intestine and lung. Not detected in skeletal muscle, thymus, spleen, liver, placenta, and peripheral blood leukocytes.

Its subcellular location is the endoplasmic reticulum membrane. The enzyme catalyses sphinganine 1-phosphate + H2O = sphinganine + phosphate. It carries out the reaction sphing-4-enine 1-phosphate + H2O = sphing-4-enine + phosphate. The catalysed reaction is (4R)-hydroxysphinganine 1-phosphate + H2O = (4R)-hydroxysphinganine + phosphate. In terms of biological role, has specific phosphohydrolase activity towards sphingoid base 1-phosphates. Has high phosphohydrolase activity against dihydrosphingosine-1-phosphate and sphingosine-1-phosphate (S1P) in vitro. Sphingosine-1-phosphate phosphatase activity is needed for efficient recycling of sphingosine into the sphingolipid synthesis pathway. May play a role in attenuating intracellular sphingosine 1-phosphate (S1P) signaling. May play a role in pro-inflammatory signaling. Plays a role in the regulation of pancreatic islet beta-cell endoplasmic reticulum stress and proliferation. This chain is Sphingosine-1-phosphate phosphatase 2, found in Homo sapiens (Human).